Reading from the N-terminus, the 562-residue chain is Dihydroxy-acid dehydratase 1 (562 aa).

Residue aspartate 80 participates in Mg(2+) binding. Cysteine 121 lines the [2Fe-2S] cluster pocket. Residues aspartate 122 and lysine 123 each contribute to the Mg(2+) site. Lysine 123 carries the N6-carboxylysine modification. Cysteine 194 provides a ligand contact to [2Fe-2S] cluster. Glutamate 446 is a Mg(2+) binding site. Serine 472 functions as the Proton acceptor in the catalytic mechanism.

This sequence belongs to the IlvD/Edd family. Homodimer. [2Fe-2S] cluster serves as cofactor. Mg(2+) is required as a cofactor.

The catalysed reaction is (2R)-2,3-dihydroxy-3-methylbutanoate = 3-methyl-2-oxobutanoate + H2O. The enzyme catalyses (2R,3R)-2,3-dihydroxy-3-methylpentanoate = (S)-3-methyl-2-oxopentanoate + H2O. The protein operates within amino-acid biosynthesis; L-isoleucine biosynthesis; L-isoleucine from 2-oxobutanoate: step 3/4. Its pathway is amino-acid biosynthesis; L-valine biosynthesis; L-valine from pyruvate: step 3/4. In terms of biological role, functions in the biosynthesis of branched-chain amino acids. Catalyzes the dehydration of (2R,3R)-2,3-dihydroxy-3-methylpentanoate (2,3-dihydroxy-3-methylvalerate) into 2-oxo-3-methylpentanoate (2-oxo-3-methylvalerate) and of (2R)-2,3-dihydroxy-3-methylbutanoate (2,3-dihydroxyisovalerate) into 2-oxo-3-methylbutanoate (2-oxoisovalerate), the penultimate precursor to L-isoleucine and L-valine, respectively. The polypeptide is Dihydroxy-acid dehydratase 1 (Staphylococcus saprophyticus subsp. saprophyticus (strain ATCC 15305 / DSM 20229 / NCIMB 8711 / NCTC 7292 / S-41)).